The primary structure comprises 302 residues: Sulfate adenylyltransferase subunit 2 (302 aa).

This sequence belongs to the PAPS reductase family. CysD subfamily. As to quaternary structure, heterodimer composed of CysD, the smaller subunit, and CysN.

It carries out the reaction sulfate + ATP + H(+) = adenosine 5'-phosphosulfate + diphosphate. It functions in the pathway sulfur metabolism; hydrogen sulfide biosynthesis; sulfite from sulfate: step 1/3. With CysN forms the ATP sulfurylase (ATPS) that catalyzes the adenylation of sulfate producing adenosine 5'-phosphosulfate (APS) and diphosphate, the first enzymatic step in sulfur assimilation pathway. APS synthesis involves the formation of a high-energy phosphoric-sulfuric acid anhydride bond driven by GTP hydrolysis by CysN coupled to ATP hydrolysis by CysD. This Zymomonas mobilis subsp. mobilis (strain ATCC 31821 / ZM4 / CP4) protein is Sulfate adenylyltransferase subunit 2.